The sequence spans 27 residues: Dermaseptin-S4 (27 aa).

It belongs to the frog skin active peptide (FSAP) family. Dermaseptin subfamily. As to quaternary structure, monomer and oligomer. Forms aggregates in aqueous environments. Expressed by the skin glands.

The protein localises to the secreted. Functionally, potent antimicrobial peptide with activity against bacteria and protozoa. Also has activity against fungi. Also shows activity against enveloped herpes simplex virus type 1. Probably acts by disturbing membrane functions with its amphipathic structure. Binds to healthy erythrocytes (this binding is receptor independent), and has strong hemolytic activity. Does not bind to P.falciparum infected erythrocytes, but accumulates within the parasite. Kills the parasite, and only at high concentrations has a hemolytic activity on the host cell. In vitro, shows high spermicidal activities. The sequence is that of Dermaseptin-S4 from Phyllomedusa sauvagei (Sauvage's leaf frog).